An 81-amino-acid chain; its full sequence is LTLVVVTIVCLDLGYTLTCLICPEEYCKRIHTCRDGENVCFKGFYEGKQLGKQFRRGCAATCPEGKPNEIVQCCSTDECNH.

The N-terminal stretch at 1-16 is a signal peptide; it reads LTLVVVTIVCLDLGYT. Disulfide bonds link cysteine 19/cysteine 40, cysteine 22/cysteine 27, cysteine 33/cysteine 58, cysteine 62/cysteine 73, and cysteine 74/cysteine 79.

This sequence belongs to the three-finger toxin family. Ancestral subfamily. Orphan group II sub-subfamily. In terms of tissue distribution, expressed by the venom gland.

It localises to the secreted. In terms of biological role, binds with low affinity to muscular (alpha-1-beta-1-delta-epsilon/CHRNA1-CHRNB1-CHRND-CHRNE) and very low affinity to neuronal (alpha-7/CHRNA7) nicotinic acetylcholine receptor (nAChR). The polypeptide is Weak neurotoxin OH-72 (Ophiophagus hannah (King cobra)).